We begin with the raw amino-acid sequence, 177 residues long: N-terminal acetyltransferase A complex catalytic subunit ard1 (177 aa).

One can recognise an N-acetyltransferase domain in the interval 1–153; that stretch reads MDIRPARISD…DAYAMHKDFS (153 aa).

This sequence belongs to the acetyltransferase family. ARD1 subfamily. As to quaternary structure, component of the N-terminal acetyltransferase A (NatA) complex, which is composed of at least ard1 and nat1.

It localises to the cytoplasm. Its subcellular location is the nucleus. It catalyses the reaction N-terminal glycyl-[protein] + acetyl-CoA = N-terminal N(alpha)-acetylglycyl-[protein] + CoA + H(+). The enzyme catalyses N-terminal L-alanyl-[protein] + acetyl-CoA = N-terminal N(alpha)-acetyl-L-alanyl-[protein] + CoA + H(+). The catalysed reaction is N-terminal L-seryl-[protein] + acetyl-CoA = N-terminal N(alpha)-acetyl-L-seryl-[protein] + CoA + H(+). It carries out the reaction N-terminal L-valyl-[protein] + acetyl-CoA = N-terminal N(alpha)-acetyl-L-valyl-[protein] + CoA + H(+). It catalyses the reaction N-terminal L-cysteinyl-[protein] + acetyl-CoA = N-terminal N(alpha)-acetyl-L-cysteinyl-[protein] + CoA + H(+). The enzyme catalyses N-terminal L-threonyl-[protein] + acetyl-CoA = N-terminal N(alpha)-acetyl-L-threonyl-[protein] + CoA + H(+). Functionally, catalytic component of the NatA N-terminal acetyltransferase, which catalyzes acetylation of proteins beginning with Met-Ser, Met-Gly and Met-Ala. N-acetylation plays a role in normal eukaryotic translation and processing, protect against proteolytic degradation and protein turnover. The protein is N-terminal acetyltransferase A complex catalytic subunit ard1 (ard1) of Schizosaccharomyces pombe (strain 972 / ATCC 24843) (Fission yeast).